The following is a 194-amino-acid chain: Bis(5'-nucleosyl)-tetraphosphatase, symmetrical (194 aa).

One can recognise an HD domain in the interval 18 to 132 (RYNHSLRVAE…IFIADYIEPG (115 aa)). Residue His-21 participates in ADP binding. His-21, His-50, and Asp-51 together coordinate Fe cation. ADP contacts are provided by residues 51 to 54 (DFCK), His-83, 109 to 110 (HT), Asp-127, Arg-133, and 172 to 177 (TVYNKT). Asp-127 serves as a coordination point for Fe cation.

The protein belongs to the Ap4A hydrolase YqeK family. In terms of assembly, homodimer.

The enzyme catalyses P(1),P(4)-bis(5'-adenosyl) tetraphosphate + H2O = 2 ADP + 2 H(+). Its activity is regulated as follows. Inhibited by EDTA. Functionally, hydrolyzes diadenosine 5',5'''-P1,P4-tetraphosphate (Ap4A) to yield ADP. Can also hydrolyze Ap3A, Ap5A, Ap4G, Ap4U and Gp4G, always releasing ADP or GDP as one of the products, but it exhibits a marked preference for Ap4A, which is mainly exerted at the substrate affinity level. This is Bis(5'-nucleosyl)-tetraphosphatase, symmetrical from Staphylococcus aureus (strain NCTC 8325 / PS 47).